Here is a 385-residue protein sequence, read N- to C-terminus: Proliferation-associated protein A (385 aa).

Belongs to the peptidase M24 family.

In Dictyostelium discoideum (Social amoeba), this protein is Proliferation-associated protein A (prlA).